A 220-amino-acid chain; its full sequence is Urease accessory protein UreF (220 aa).

This sequence belongs to the UreF family. In terms of assembly, ureD, UreF and UreG form a complex that acts as a GTP-hydrolysis-dependent molecular chaperone, activating the urease apoprotein by helping to assemble the nickel containing metallocenter of UreC. The UreE protein probably delivers the nickel.

The protein localises to the cytoplasm. In terms of biological role, required for maturation of urease via the functional incorporation of the urease nickel metallocenter. The polypeptide is Urease accessory protein UreF (Bordetella parapertussis (strain 12822 / ATCC BAA-587 / NCTC 13253)).